A 283-amino-acid chain; its full sequence is MIIDKLYENVEKKGCVCVGLDTDISYLPKGFLNKFTNIEDAIFAFNQRIVDSTFDVSACYKVQIAYYEAMGIKGMILYKKTLEYIRKKGGIVIADIKRGDISATAKMYAKAHFEGDFESDFITLNPYMGMDTLEPYKDYFKNKEKGVFLLLRTSNEGSKDIQYLDLKDNKKVYNKVGEKIENIGKEFLGNCGYSSIGAVVGCTAEENNIRKELKHTFFLIPGYGAQGGKAEVAKSYLSGGNGGIVNSSRGILLAYKKYDEEGKNFEECARNEVINMKKTLQII.

K97 acts as the Proton donor in catalysis.

It belongs to the OMP decarboxylase family. Type 2 subfamily.

It catalyses the reaction orotidine 5'-phosphate + H(+) = UMP + CO2. It participates in pyrimidine metabolism; UMP biosynthesis via de novo pathway; UMP from orotate: step 2/2. The protein is Orotidine 5'-phosphate decarboxylase of Clostridium botulinum (strain ATCC 19397 / Type A).